The following is a 250-amino-acid chain: MKICLIDETGAGDGALSVLAARWGLEQDEDNLMALVLTTEHLELRKRDEPKLGGIFVDFVGGAMAHRRKFGGGRGEAVAKAVGIKGDYLPDVVDATAGLGRDAFVLASVGCRVRMLERNPVVAALLDDGLARGYADAEIGGWLQERLQLIHASSLTALTDITPRPQVVYLDPMFPHKQKSALVKKEMRVFQSLVGPDLDADGLLAPARQLATKRVVVKRPDYAPPLAEVATPNAVVTKGHRFDIYAGTPE.

S-adenosyl-L-methionine-binding positions include 101-102 (RD), 117-118 (ER), 153-154 (SS), and Asp171.

It belongs to the methyltransferase superfamily. RsmJ family.

It is found in the cytoplasm. It carries out the reaction guanosine(1516) in 16S rRNA + S-adenosyl-L-methionine = N(2)-methylguanosine(1516) in 16S rRNA + S-adenosyl-L-homocysteine + H(+). In terms of biological role, specifically methylates the guanosine in position 1516 of 16S rRNA. This Klebsiella pneumoniae (strain 342) protein is Ribosomal RNA small subunit methyltransferase J.